Here is a 1125-residue protein sequence, read N- to C-terminus: RGS domain-containing serine/threonine-protein kinase A (1125 aa).

Disordered stretches follow at residues 1–77 (MKTS…GGNK), 96–191 (RRNS…IVDD), 276–416 (GISP…NNTN), and 455–480 (YVGGNKGSEDRRKKIEQKKKQVPAPE). 2 stretches are compositionally biased toward low complexity: residues 7–30 (SSNSNSNNNNNNNNNNNNNNNNNN) and 37–66 (SSKSLSPPTSPKQMSGNSIISNSTGNLSSG). The segment covering 121–136 (LDSKPPKPFDEKDDPI) has biased composition (basic and acidic residues). 2 stretches are compositionally biased toward low complexity: residues 159 to 191 (QPQQTQQQSSGENLNNSSDRNNNSNENNQIVDD) and 281 to 342 (NNNN…LNNS). The span at 343–361 (PRYLNSSSSPRSMQHLSSK) shows a compositional bias: polar residues. Over residues 362 to 416 (ITTTTTTTTTTTTTTSDDNNGNTNNNISNNNNIINNSNNNSNSNNNNNNNINNTN) the composition is skewed to low complexity. Positions 487–603 (KFIETITDPT…ISSPFNPEWK (117 aa)) constitute an RGS domain. A compositionally biased stretch (low complexity) spans 617–685 (TTTQPINNFN…NNSNGSNTSS (69 aa)). Disordered stretches follow at residues 617–710 (TTTQ…KERS) and 723–762 (NLSNHSNSSSNSNGKDKDKDKDKNENTTDNSNNNNNSNNN). The span at 690-710 (ERLDNIKGNRERVDSNGKERS) shows a compositional bias: basic and acidic residues. Residues 723-735 (NLSNHSNSSSNSN) are compositionally biased toward low complexity. The segment covering 736-748 (GKDKDKDKDKNEN) has biased composition (basic and acidic residues). The span at 749 to 762 (TTDNSNNNNNSNNN) shows a compositional bias: low complexity. Positions 842–1097 (VSIHKWIASG…YLESIIYPSV (256 aa)) constitute a Protein kinase domain. ATP is bound by residues 848-856 (IASGSSGRV) and Lys-869. The active-site Proton acceptor is the Asp-963.

It belongs to the protein kinase superfamily. TKL Ser/Thr protein kinase family. In terms of processing, autophosphorylated.

The protein resides in the cytoplasm. It is found in the cell membrane. It carries out the reaction L-seryl-[protein] + ATP = O-phospho-L-seryl-[protein] + ADP + H(+). The catalysed reaction is L-threonyl-[protein] + ATP = O-phospho-L-threonyl-[protein] + ADP + H(+). Up-regulated by cAMP. In terms of biological role, serine/threonine kinase involved in negative regulation of chemotaxis. This Dictyostelium discoideum (Social amoeba) protein is RGS domain-containing serine/threonine-protein kinase A (rckA).